The sequence spans 436 residues: Bystin (436 aa).

The disordered stretch occupies residues 1–105; it reads MPKLKVTRGA…GSDEEDEEWP (105 aa). The residue at position 54 (Ser54) is a Phosphoserine. The span at 70-86 shows a compositional bias: basic and acidic residues; it reads TEHATGDRPAKPRERAT. The span at 96–105 shows a compositional bias: acidic residues; it reads GSDEEDEEWP. Ser97 carries the post-translational modification Phosphoserine. The residue at position 155 (Thr155) is a Phosphothreonine. 2 positions are modified to phosphoserine: Ser166 and Ser413.

This sequence belongs to the bystin family. Binds trophinin, tastin and cytokeratins.

It localises to the cytoplasm. It is found in the nucleus. The protein localises to the nucleolus. In terms of biological role, required for processing of 20S pre-rRNA precursor and biogenesis of 40S ribosomal subunits. In Rattus norvegicus (Rat), this protein is Bystin.